The following is a 20-amino-acid chain: GMP synthase [glutamine-hydrolyzing] (20 aa).

The GMPS ATP-PPase domain maps to 1-20 (ALGDQLLSVFVDHTLVDEVA).

As to quaternary structure, homodimer.

The enzyme catalyses XMP + L-glutamine + ATP + H2O = GMP + L-glutamate + AMP + diphosphate + 2 H(+). It functions in the pathway purine metabolism; GMP biosynthesis; GMP from XMP (L-Gln route): step 1/1. Catalyzes the synthesis of GMP from XMP. The chain is GMP synthase [glutamine-hydrolyzing] (guaA) from Fructilactobacillus sanfranciscensis (Lactobacillus sanfranciscensis).